A 300-amino-acid polypeptide reads, in one-letter code: UDP-N-acetylenolpyruvoylglucosamine reductase (300 aa).

In terms of domain architecture, FAD-binding PCMH-type spans 30-194; sequence KVGGPADFFA…LAAVFSLAAG (165 aa). R174 is an active-site residue. S223 functions as the Proton donor in the catalytic mechanism. The active site involves E293.

It belongs to the MurB family. FAD serves as cofactor.

It localises to the cytoplasm. The enzyme catalyses UDP-N-acetyl-alpha-D-muramate + NADP(+) = UDP-N-acetyl-3-O-(1-carboxyvinyl)-alpha-D-glucosamine + NADPH + H(+). The protein operates within cell wall biogenesis; peptidoglycan biosynthesis. Functionally, cell wall formation. This chain is UDP-N-acetylenolpyruvoylglucosamine reductase, found in Geotalea uraniireducens (strain Rf4) (Geobacter uraniireducens).